The primary structure comprises 92 residues: Putative defensin-like protein 225 (92 aa).

The N-terminal stretch at 1–26 (MKYGVLFMVSCGVMFLILSHVEEVEA) is a signal peptide. 3 disulfides stabilise this stretch: C32–C92, C42–C70, and C68–C88.

It belongs to the DEFL family.

It localises to the secreted. This Arabidopsis thaliana (Mouse-ear cress) protein is Putative defensin-like protein 225 (SCRL1).